We begin with the raw amino-acid sequence, 172 residues long: Ribosome maturation factor RimM (172 aa).

Residues 95 to 168 form the PRC barrel domain; that stretch reads QEGEFYYHQI…CVDVELMEGL (74 aa).

It belongs to the RimM family. As to quaternary structure, binds ribosomal protein uS19.

Its subcellular location is the cytoplasm. An accessory protein needed during the final step in the assembly of 30S ribosomal subunit, possibly for assembly of the head region. Essential for efficient processing of 16S rRNA. May be needed both before and after RbfA during the maturation of 16S rRNA. It has affinity for free ribosomal 30S subunits but not for 70S ribosomes. The polypeptide is Ribosome maturation factor RimM (Streptococcus pyogenes serotype M49 (strain NZ131)).